We begin with the raw amino-acid sequence, 209 residues long: Adenylate kinase (209 aa).

Residue 59-64 (GSGKRT) coordinates ATP. The tract at residues 79 to 108 (SSGQVLTRGVESGSETSQLAHSYVSRGERV) is NMP. Residues Ser-80, 106-108 (ERV), 135-138 (GYPR), and Gln-142 each bind AMP. An LID region spans residues 172–205 (HRRYDPATNKXYHMLDNPPPGGRCRVMRTAPAEG). Residue Arg-173 coordinates ATP.

Belongs to the adenylate kinase family. Monomer.

It localises to the cytoplasm. The enzyme catalyses AMP + ATP = 2 ADP. Functionally, catalyzes the reversible transfer of the terminal phosphate group between ATP and AMP. Plays an important role in cellular energy homeostasis and in adenine nucleotide metabolism. The protein is Adenylate kinase of Trypanosoma brucei rhodesiense.